Here is an 85-residue protein sequence, read N- to C-terminus: Large ribosomal subunit protein bL31B (85 aa).

Belongs to the bacterial ribosomal protein bL31 family. Type B subfamily. In terms of assembly, part of the 50S ribosomal subunit.

This is Large ribosomal subunit protein bL31B from Pseudarthrobacter chlorophenolicus (strain ATCC 700700 / DSM 12829 / CIP 107037 / JCM 12360 / KCTC 9906 / NCIMB 13794 / A6) (Arthrobacter chlorophenolicus).